We begin with the raw amino-acid sequence, 520 residues long: Succinyl-CoA:3-ketoacid coenzyme A transferase 2A, mitochondrial (520 aa).

The transit peptide at 1–39 (MAALRLLAWALPRGVSALRPPPALPHRLIRRYVSDRSGS) directs the protein to the mitochondrion. The disordered stretch occupies residues 280–299 (ERLTTRDSKPAPGSKDNDPS). E342 serves as the catalytic 5-glutamyl coenzyme A thioester intermediate.

It belongs to the 3-oxoacid CoA-transferase family. As to quaternary structure, homodimer.

It localises to the mitochondrion. The enzyme catalyses a 3-oxo acid + succinyl-CoA = a 3-oxoacyl-CoA + succinate. It functions in the pathway ketone metabolism; succinyl-CoA degradation; acetoacetyl-CoA from succinyl-CoA: step 1/1. Its function is as follows. Key enzyme for ketone body catabolism. Transfers the CoA moiety from succinate to acetoacetate. Formation of the enzyme-CoA intermediate proceeds via an unstable anhydride species formed between the carboxylate groups of the enzyme and substrate. Probably play and important roles in the energy metabolism of spermatozoa. The sequence is that of Succinyl-CoA:3-ketoacid coenzyme A transferase 2A, mitochondrial (Oxct2a) from Mus musculus (Mouse).